The sequence spans 128 residues: Virion-associated protein (128 aa).

Coiled coils occupy residues 1-30 and 37-58; these read MNLATIASEIEVVKTNQKTIESKIDQILAK and ESSNLESVAAKIISDLTKEMKE. The disordered stretch occupies residues 98-128; sequence FDVGNEGMGSSTNPNALKWPPTEKPQPWPPR. Pro residues predominate over residues 119 to 128; the sequence is TEKPQPWPPR. Residues 122–128 are capsid binding; the sequence is PQPWPPR.

Belongs to the caulimovirus ORF III family. Homotetramer, through coiled-coil domain. Homotrimer when interacts with icosehadral capsid. Interacts with capsid protein, and with Movement protein.

It is found in the virion. The protein localises to the host cell junction. Its subcellular location is the host plasmodesma. Functionally, plays a role in virus cell-to-cell and plant-to-plant transmission. Interacts with virion icosahedral capsid and movement protein, thereby facilitating virion cell-to-cell transmission through plasmodesmata opened by viral movement protein. Also interacts with aphid transmission factor, attaching the virion to aphid stylet when the animal feeds on an virus infected plant. Aphid saliva may later detach the virion, inducing release of infectious particles when the animal feeds on a new plant. The sequence is that of Virion-associated protein from Carnation etched ring virus (CERV).